A 1070-amino-acid chain; its full sequence is DNA-directed RNA polymerase subunit beta (1070 aa).

Belongs to the RNA polymerase beta chain family. In plastids the minimal PEP RNA polymerase catalytic core is composed of four subunits: alpha, beta, beta', and beta''. When a (nuclear-encoded) sigma factor is associated with the core the holoenzyme is formed, which can initiate transcription.

It is found in the plastid. The protein localises to the chloroplast. The catalysed reaction is RNA(n) + a ribonucleoside 5'-triphosphate = RNA(n+1) + diphosphate. DNA-dependent RNA polymerase catalyzes the transcription of DNA into RNA using the four ribonucleoside triphosphates as substrates. The sequence is that of DNA-directed RNA polymerase subunit beta from Dioscorea elephantipes (Elephant's foot yam).